The following is a 606-amino-acid chain: Melanoma-associated antigen D2 (606 aa).

The disordered stretch occupies residues 1–204 (MSDTSESGAG…QASGTTGGRR (204 aa)). Serine 2 bears the N-acetylserine mark. Phosphoserine is present on serine 5. The segment covering 24-37 (SSMMQTLLTVTQNV) has biased composition (polar residues). A Phosphothreonine modification is found at threonine 72. Over residues 81 to 93 (TQASSTTQLTDTQ) the composition is skewed to polar residues. Positions 122-131 (ETKKVSHVAD) are enriched in basic and acidic residues. Residues 142-164 (EAAPSQAPADEPEPESAAAQSQE) are compositionally biased toward low complexity. Position 157 is a phosphoserine (serine 157). The span at 171 to 181 (KVKAKKARKVK) shows a compositional bias: basic residues. Phosphoserine is present on residues serine 190, serine 191, serine 194, serine 197, serine 244, and serine 247. A compositionally biased stretch (basic residues) spans 248 to 260 (PKARRGKARRRAA). A disordered region spans residues 248–275 (PKARRGKARRRAAKLQSSQEPEAPPPRD). Serine 264 and serine 265 each carry phosphoserine. In terms of domain architecture, MAGE spans 279–478 (LQGRANDLVK…KEWAAQYREA (200 aa)). Residues 534–563 (GAEAKAKAQESGSASTGASTSTNNSASASA) form a disordered region.

Interacts with GNAS. May interact with DNAJB1. Widely expressed. In the developing and adult kidney, expressed in the thick ascending limb of the loop of Henle and the distal convoluted tubules outside the loop.

In terms of biological role, regulates the expression, localization to the plasma membrane and function of the sodium chloride cotransporters SLC12A1 and SLC12A3, two key components of salt reabsorption in the distal renal tubule. This is Melanoma-associated antigen D2 (MAGED2) from Homo sapiens (Human).